The following is a 184-amino-acid chain: Large ribosomal subunit protein uL22 (184 aa).

The protein belongs to the universal ribosomal protein uL22 family.

This Yarrowia lipolytica (strain CLIB 122 / E 150) (Yeast) protein is Large ribosomal subunit protein uL22 (RPL17).